A 458-amino-acid polypeptide reads, in one-letter code: GTPase Obg (458 aa).

The 157-residue stretch at methionine 1–leucine 157 folds into the Obg domain. The OBG-type G domain occupies alanine 158–serine 326. GTP contacts are provided by residues glycine 164–serine 171, phenylalanine 189–asparagine 193, aspartate 210–glycine 213, asparagine 280–aspartate 283, and serine 307–alanine 309. Mg(2+) is bound by residues serine 171 and threonine 191. Residues alanine 341–glycine 419 enclose the OCT domain. Residues threonine 420–lysine 458 form a disordered region. Residues aspartate 423 to glutamate 446 show a composition bias toward basic and acidic residues. The segment covering lysine 447–lysine 458 has biased composition (basic residues).

This sequence belongs to the TRAFAC class OBG-HflX-like GTPase superfamily. OBG GTPase family. As to quaternary structure, monomer. It depends on Mg(2+) as a cofactor.

It localises to the cytoplasm. Functionally, an essential GTPase which binds GTP, GDP and possibly (p)ppGpp with moderate affinity, with high nucleotide exchange rates and a fairly low GTP hydrolysis rate. Plays a role in control of the cell cycle, stress response, ribosome biogenesis and in those bacteria that undergo differentiation, in morphogenesis control. The chain is GTPase Obg from Elusimicrobium minutum (strain Pei191).